The chain runs to 333 residues: Methionine import ATP-binding protein MetN 1 (333 aa).

The 240-residue stretch at 2 to 241 (ITFEGVEKVY…PETETAKSFV (240 aa)) folds into the ABC transporter domain. 38-45 (GFSGAGKS) contributes to the ATP binding site.

This sequence belongs to the ABC transporter superfamily. Methionine importer (TC 3.A.1.24) family. The complex is composed of two ATP-binding proteins (MetN), two transmembrane proteins (MetI) and a solute-binding protein (MetQ).

The protein resides in the cell membrane. It catalyses the reaction L-methionine(out) + ATP + H2O = L-methionine(in) + ADP + phosphate + H(+). It carries out the reaction D-methionine(out) + ATP + H2O = D-methionine(in) + ADP + phosphate + H(+). Part of the ABC transporter complex MetNIQ involved in methionine import. Responsible for energy coupling to the transport system. The polypeptide is Methionine import ATP-binding protein MetN 1 (Bacillus licheniformis (strain ATCC 14580 / DSM 13 / JCM 2505 / CCUG 7422 / NBRC 12200 / NCIMB 9375 / NCTC 10341 / NRRL NRS-1264 / Gibson 46)).